Reading from the N-terminus, the 505-residue chain is Maturase K (505 aa).

The protein belongs to the intron maturase 2 family. MatK subfamily.

It is found in the plastid. Its subcellular location is the chloroplast. Its function is as follows. Usually encoded in the trnK tRNA gene intron. Probably assists in splicing its own and other chloroplast group II introns. The chain is Maturase K from Blitum bonus-henricus (Good King Henry).